The chain runs to 333 residues: Ornithine carbamoyltransferase (333 aa).

Carbamoyl phosphate contacts are provided by residues 56–59 (STRT), Gln83, Arg107, and 134–137 (HPTQ). L-ornithine is bound by residues Asn167, Asp231, and 235–236 (SM). Carbamoyl phosphate-binding positions include 273–274 (CL) and Arg318.

Belongs to the aspartate/ornithine carbamoyltransferase superfamily. OTCase family.

Its subcellular location is the cytoplasm. The enzyme catalyses carbamoyl phosphate + L-ornithine = L-citrulline + phosphate + H(+). It participates in amino-acid biosynthesis; L-arginine biosynthesis; L-arginine from L-ornithine and carbamoyl phosphate: step 1/3. Functionally, reversibly catalyzes the transfer of the carbamoyl group from carbamoyl phosphate (CP) to the N(epsilon) atom of ornithine (ORN) to produce L-citrulline. This Staphylococcus aureus (strain COL) protein is Ornithine carbamoyltransferase (argF).